The sequence spans 90 residues: YcgL domain-containing protein Spro_2755 (90 aa).

Positions 1 to 85 (MLCVIYRSSK…PLENLLKQHL (85 aa)) constitute a YcgL domain.

In Serratia proteamaculans (strain 568), this protein is YcgL domain-containing protein Spro_2755.